Here is a 514-residue protein sequence, read N- to C-terminus: 2,3-bisphosphoglycerate-independent phosphoglycerate mutase (514 aa).

Mn(2+) contacts are provided by Asp14 and Ser64. Ser64 (phosphoserine intermediate) is an active-site residue. Substrate is bound by residues His125, 155 to 156, Arg187, Arg193, 263 to 266, and Lys336; these read RD and RADR. Residues Asp403, His407, Asp444, His445, and His463 each coordinate Mn(2+).

The protein belongs to the BPG-independent phosphoglycerate mutase family. As to quaternary structure, monomer. It depends on Mn(2+) as a cofactor.

It catalyses the reaction (2R)-2-phosphoglycerate = (2R)-3-phosphoglycerate. Its pathway is carbohydrate degradation; glycolysis; pyruvate from D-glyceraldehyde 3-phosphate: step 3/5. Catalyzes the interconversion of 2-phosphoglycerate and 3-phosphoglycerate. The chain is 2,3-bisphosphoglycerate-independent phosphoglycerate mutase from Shewanella oneidensis (strain ATCC 700550 / JCM 31522 / CIP 106686 / LMG 19005 / NCIMB 14063 / MR-1).